Here is a 317-residue protein sequence, read N- to C-terminus: Olfactory receptor 2G2 (317 aa).

The Extracellular segment spans residues 1-28; sequence MGMVRHTNESNLAGFILLGFSDYPQLQK. Residue N8 is glycosylated (N-linked (GlcNAc...) asparagine). Residues 29–52 traverse the membrane as a helical segment; that stretch reads VLFVLILILYLLTILGNTTIILVS. Residues 53–60 lie on the Cytoplasmic side of the membrane; that stretch reads RLEPKLHM. Residues 61 to 82 traverse the membrane as a helical segment; it reads PMYFFLSHLSFLYRCFTSSVIP. Over 83–103 the chain is Extracellular; that stretch reads QLLVNLWEPMKTIAYGGCLVH. Cysteines 100 and 192 form a disulfide. Residues 104–123 form a helical membrane-spanning segment; the sequence is LYNSHALGSTECVLPAVMSC. Over 124 to 142 the chain is Cytoplasmic; it reads DRYVAVCRPLHYTVLMHIH. Residues 143 to 161 traverse the membrane as a helical segment; it reads LCMALASMAWLSGIATTLV. At 162–198 the chain is on the extracellular side; that stretch reads QSTLTLQLPFCGHRQVDHFICEVPVLIKLACVGTTFN. A helical membrane pass occupies residues 199-222; the sequence is EAELFVASILFLIVPVSFILVSSG. Topologically, residues 223–239 are cytoplasmic; that stretch reads YIAHAVLRIKSATRRQK. Residues 240-262 form a helical membrane-spanning segment; it reads AFGTCFSHLTVVTIFYGTIIFMY. The Extracellular portion of the chain corresponds to 263–275; the sequence is LQPAKSRSRDQGK. A helical membrane pass occupies residues 276-295; that stretch reads FVSLFYTVVTRMLNPLIYTL. Topologically, residues 296–317 are cytoplasmic; the sequence is RIKEVKGALKKVLAKALGVNIL.

Belongs to the G-protein coupled receptor 1 family.

The protein localises to the cell membrane. Odorant receptor. The sequence is that of Olfactory receptor 2G2 (OR2G2) from Homo sapiens (Human).